A 78-amino-acid chain; its full sequence is U7-lycotoxin-Ls1f (78 aa).

The N-terminal stretch at 1–22 (MKLIIFTGLALLLIVSLIDVEA) is a signal peptide. The propeptide occupies 23–26 (QNEG).

This sequence belongs to the neurotoxin 19 (CSTX) family. 07 (U7-Lctx) subfamily. Contains 4 disulfide bonds. In terms of tissue distribution, expressed by the venom gland.

The protein resides in the secreted. The chain is U7-lycotoxin-Ls1f from Lycosa singoriensis (Wolf spider).